Reading from the N-terminus, the 431-residue chain is MIDSLDLVIDTIVAREVLDSRGNPTVEAEVLLEAGAIGRAIVPSGASTGAHEAHELRDGDSRYMGKGVTKAVNHIEDRIAPALCGISSLDQASVDGTMQELDGSDNKSSLGANAILAVSMATARAAANGLGLPLYRYLGGPMASLLPVPLMNVINGGAHAANNLDFQEFMLVPHGASTFRESLRMGAEVFHTLKGLLSAQGLSTAVGDEGGFAPNLTNNDAAGDLLIQAIEKAGYSPGKDISLALDVASTEFYKDGCYAFGGGSYTSTEMVNELEKLVDRYPIISIEDGLAEDDWQGWALLTKKLGKRIQLIGDDIFVTSTKRLQQGIDQNVANSILIKVNQIGSLTETLQAIDLAGRSGYTSVISHRSGETEDTTIADLAVATRAGQIKTGSLSRSERVAKYNQLLRIEDELGTQALYAGATGQGPRGRS.

A (2R)-2-phosphoglycerate-binding site is contributed by glutamine 167. Glutamate 209 serves as the catalytic Proton donor. Aspartate 246, glutamate 287, and aspartate 314 together coordinate Mg(2+). The (2R)-2-phosphoglycerate site is built by lysine 339, arginine 368, serine 369, and lysine 390. The active-site Proton acceptor is lysine 339.

This sequence belongs to the enolase family. Mg(2+) is required as a cofactor.

The protein localises to the cytoplasm. It is found in the secreted. It localises to the cell surface. The enzyme catalyses (2R)-2-phosphoglycerate = phosphoenolpyruvate + H2O. The protein operates within carbohydrate degradation; glycolysis; pyruvate from D-glyceraldehyde 3-phosphate: step 4/5. Catalyzes the reversible conversion of 2-phosphoglycerate (2-PG) into phosphoenolpyruvate (PEP). It is essential for the degradation of carbohydrates via glycolysis. The protein is Enolase of Prochlorococcus marinus (strain MIT 9303).